A 236-amino-acid chain; its full sequence is UPF0257 lipoprotein YnfC (236 aa).

An N-terminal signal peptide occupies residues 1–16; the sequence is MKYKLLPCLLAILLTG. Cysteine 17 is lipidated: N-palmitoyl cysteine. Cysteine 17 carries the S-diacylglycerol cysteine lipid modification.

This sequence belongs to the UPF0257 family.

The protein resides in the cell membrane. This Escherichia coli O45:K1 (strain S88 / ExPEC) protein is UPF0257 lipoprotein YnfC.